The following is a 53-amino-acid chain: Conotoxin Cal6.27 (53 aa).

The N-terminal stretch at 1-24 (MKLTCVLIAAMLLLAVCQLDSADA) is a signal peptide. 3 disulfides stabilise this stretch: Cys-29–Cys-43, Cys-36–Cys-47, and Cys-42–Cys-51.

Belongs to the conotoxin O1 superfamily. In terms of tissue distribution, expressed by the venom duct.

The protein resides in the secreted. Probable neurotoxin. In Californiconus californicus (California cone), this protein is Conotoxin Cal6.27.